Here is a 196-residue protein sequence, read N- to C-terminus: Charged multivesicular body protein 1a (196 aa).

Residues 5 to 41 (LFQLKFTAKQLEKLAKKAEKDSNTEQAKVKKALQQKN) are a coiled coil. Residues 170–181 (QGASSVGESSTR) are compositionally biased toward polar residues. A disordered region spans residues 170–196 (QGASSVGESSTRTQEDQLSRRLASLRN). The short motif at 185 to 195 (DQLSRRLASLR) is the MIT-interacting motif element.

The protein belongs to the SNF7 family. In terms of assembly, probable peripherally associated component of the endosomal sorting required for transport complex III (ESCRT-III).

The protein resides in the cytoplasm. Its subcellular location is the endosome membrane. In terms of biological role, probable peripherally associated component of the endosomal sorting required for transport complex III (ESCRT-III) which is involved in multivesicular bodies (MVBs) formation and sorting of endosomal cargo proteins into MVBs. MVBs contain intraluminal vesicles (ILVs) that are generated by invagination and scission from the limiting membrane of the endosome and mostly are delivered to lysosomes enabling degradation of membrane proteins, such as stimulated growth factor receptors, lysosomal enzymes and lipids. This is Charged multivesicular body protein 1a (chmp1a) from Xenopus laevis (African clawed frog).